Reading from the N-terminus, the 385-residue chain is 8-amino-7-oxononanoate synthase (385 aa).

Arg-21 lines the substrate pocket. Residue 108–109 (GF) participates in pyridoxal 5'-phosphate binding. Substrate is bound at residue His-133. Ser-179, His-207, and Thr-233 together coordinate pyridoxal 5'-phosphate. Lys-236 carries the post-translational modification N6-(pyridoxal phosphate)lysine. Thr-352 provides a ligand contact to substrate.

The protein belongs to the class-II pyridoxal-phosphate-dependent aminotransferase family. BioF subfamily. As to quaternary structure, homodimer. The cofactor is pyridoxal 5'-phosphate.

The enzyme catalyses 6-carboxyhexanoyl-[ACP] + L-alanine + H(+) = (8S)-8-amino-7-oxononanoate + holo-[ACP] + CO2. It participates in cofactor biosynthesis; biotin biosynthesis. Catalyzes the decarboxylative condensation of pimeloyl-[acyl-carrier protein] and L-alanine to produce 8-amino-7-oxononanoate (AON), [acyl-carrier protein], and carbon dioxide. This chain is 8-amino-7-oxononanoate synthase, found in Salmonella agona (strain SL483).